The primary structure comprises 188 residues: Peptide deformylase (188 aa).

Positions 94 and 136 each coordinate Fe cation. Glutamate 137 is a catalytic residue. Histidine 140 contacts Fe cation.

This sequence belongs to the polypeptide deformylase family. Requires Fe(2+) as cofactor.

It catalyses the reaction N-terminal N-formyl-L-methionyl-[peptide] + H2O = N-terminal L-methionyl-[peptide] + formate. Its function is as follows. Removes the formyl group from the N-terminal Met of newly synthesized proteins. Requires at least a dipeptide for an efficient rate of reaction. N-terminal L-methionine is a prerequisite for activity but the enzyme has broad specificity at other positions. The polypeptide is Peptide deformylase (Pelodictyon phaeoclathratiforme (strain DSM 5477 / BU-1)).